A 539-amino-acid chain; its full sequence is Glucose-6-phosphate isomerase (539 aa).

Glutamate 340 (proton donor) is an active-site residue. Residues histidine 371 and lysine 500 contribute to the active site.

Belongs to the GPI family.

The protein resides in the cytoplasm. It carries out the reaction alpha-D-glucose 6-phosphate = beta-D-fructose 6-phosphate. It participates in carbohydrate biosynthesis; gluconeogenesis. The protein operates within carbohydrate degradation; glycolysis; D-glyceraldehyde 3-phosphate and glycerone phosphate from D-glucose: step 2/4. Its function is as follows. Catalyzes the reversible isomerization of glucose-6-phosphate to fructose-6-phosphate. This chain is Glucose-6-phosphate isomerase, found in Ruegeria pomeroyi (strain ATCC 700808 / DSM 15171 / DSS-3) (Silicibacter pomeroyi).